A 628-amino-acid polypeptide reads, in one-letter code: Forkhead box protein O (628 aa).

5 disordered regions span residues 39–77 (RARS…DSQQ), 182–205 (KSVR…RAKK), 217–269 (GLND…RLSP), 316–359 (QQQG…APGY), and 389–415 (NSVT…YSNV). At threonine 44 the chain carries Phosphothreonine; by PKB/AKT1. Positions 63–77 (TKASNQQLAPGDSQQ) are enriched in polar residues. Serine 75 is subject to Phosphoserine. Residues 95-201 (WGNLSYADLI…ETSRYEKRRG (107 aa)) constitute a DNA-binding region (fork-head). Residue serine 190 is modified to Phosphoserine; by PKB/AKT1. Polar residues-rich tracts occupy residues 221 to 230 (ATPSPSSSVS) and 256 to 265 (RASSNASSCG). Serine 259 carries the post-translational modification Phosphoserine; by PKB/AKT1. Residues serine 262, serine 263, and serine 268 each carry the phosphoserine modification. Pro residues predominate over residues 328-337 (SQPPPPPYQP). Residues 338–351 (PQHQQAQQQQSPYA) show a composition bias toward low complexity. Positions 402–414 (SEPSSDSLNTYSN) are enriched in polar residues.

Interacts with melt.

The protein localises to the cytoplasm. The protein resides in the nucleus. Its function is as follows. Transcription factor involved in the regulation of the insulin signaling pathway. Consistently activates both the downstream target Thor\d4EBP and the feedback control target InR. Involved in negative regulation of the cell cycle, modulating cell growth and proliferation. In response to cellular stresses, such as nutrient deprivation or increased levels of reactive oxygen species, foxo is activated and inhibits growth through the action of target genes such as Thor. Foxo activated in the adult fat body can regulate lifespan in adults; an insulin peptide itself may function as one secondary messenger of insulin-regulated aging. Also regulates Lip4, homolog of human acid lipases, thereby acting as a key modulator of lipid metabolism by insulin signaling and integrates insulin responses to glucose and lipid homeostasis. This is Forkhead box protein O from Drosophila yakuba (Fruit fly).